We begin with the raw amino-acid sequence, 464 residues long: Mitogen-activated protein kinase 10 (464 aa).

Residues 64–359 form the Protein kinase domain; sequence YQNLKPIGSG…VDDALQHPYI (296 aa). ATP-binding positions include 70–78 and lysine 93; that span reads IGSGAQGIV. Aspartate 189 acts as the Proton acceptor in catalysis. Residue threonine 221 is modified to Phosphothreonine; by MAP2K7. A TXY motif is present at residues 221-223; that stretch reads TPY. The residue at position 223 (tyrosine 223) is a Phosphotyrosine; by MAP2K4. Residues 405–464 form a disordered region; the sequence is TKNGVVKGQPSPSGAAVNSSESLPPSSSVNDISSMSTDQTLASDTDSSLEASAGPLGCCR. Low complexity predominate over residues 423 to 432; it reads SSESLPPSSS. Residues 433-454 are compositionally biased toward polar residues; that stretch reads VNDISSMSTDQTLASDTDSSLE. Residues cysteine 462 and cysteine 463 are each lipidated (S-palmitoyl cysteine).

The protein belongs to the protein kinase superfamily. CMGC Ser/Thr protein kinase family. MAP kinase subfamily. Interacts with MAPK8IP1/JIP-1 and MAPK8IP3/JIP-3/JSAP1. Interacts with SPAG9/MAPK8IP4/JIP4. Interacts with HDAC9 and MAPKBP1. Interacts with ARRB2; the interaction enhances MAPK10 activation by MAP3K5. Interacts with SARM1. Interacts with JUND; interaction is inhibited in the presence of MEN1. The cofactor is Mg(2+). In terms of processing, dually phosphorylated on Thr-221 and Tyr-223 by MAP2K4 and MAP2K7, which activates the enzyme. MAP2K7 shows a strong preference for Thr-221 while MAP2K4 phosphorylates Tyr-223 preferentially. Weakly autophosphorylated on threonine and tyrosine residues in vitro. Palmitoylation regulates subcellular location and axonal development.

The protein resides in the cytoplasm. The protein localises to the membrane. Its subcellular location is the nucleus. It localises to the mitochondrion. It carries out the reaction L-seryl-[protein] + ATP = O-phospho-L-seryl-[protein] + ADP + H(+). It catalyses the reaction L-threonyl-[protein] + ATP = O-phospho-L-threonyl-[protein] + ADP + H(+). Activated by threonine and tyrosine phosphorylation by two dual specificity kinases, MAP2K4 and MAP2K7. MAP2K7 phosphorylates MAPK10 on Thr-221 causing a conformational change and a large increase in Vmax for the enzyme. MAP2K4 then phosphorylates Tyr-223 resulting in a further increase in Vmax. Inhibited by dual specificity phosphatases, such as DUSP1. Inhibited by HDAC9. Functionally, serine/threonine-protein kinase involved in various processes such as neuronal proliferation, differentiation, migration and programmed cell death. Extracellular stimuli such as pro-inflammatory cytokines or physical stress stimulate the stress-activated protein kinase/c-Jun N-terminal kinase (SAP/JNK) signaling pathway. In this cascade, two dual specificity kinases MAP2K4/MKK4 and MAP2K7/MKK7 phosphorylate and activate MAPK10/JNK3. In turn, MAPK10/JNK3 phosphorylates a number of transcription factors, primarily components of AP-1 such as JUN and ATF2 and thus regulates AP-1 transcriptional activity. Plays regulatory roles in the signaling pathways during neuronal apoptosis. Phosphorylates the neuronal microtubule regulator STMN2. Acts in the regulation of the amyloid-beta precursor protein/APP signaling during neuronal differentiation by phosphorylating APP. Also participates in neurite growth in spiral ganglion neurons. Phosphorylates the CLOCK-BMAL1 heterodimer and plays a role in the photic regulation of the circadian clock. Phosphorylates JUND and this phosphorylation is inhibited in the presence of MEN1. This is Mitogen-activated protein kinase 10 (Mapk10) from Rattus norvegicus (Rat).